The chain runs to 376 residues: Ribosomal RNA large subunit methyltransferase G (376 aa).

It belongs to the methyltransferase superfamily. RlmG family.

The protein resides in the cytoplasm. The enzyme catalyses guanosine(1835) in 23S rRNA + S-adenosyl-L-methionine = N(2)-methylguanosine(1835) in 23S rRNA + S-adenosyl-L-homocysteine + H(+). In terms of biological role, specifically methylates the guanine in position 1835 (m2G1835) of 23S rRNA. This Klebsiella pneumoniae (strain 342) protein is Ribosomal RNA large subunit methyltransferase G.